The primary structure comprises 72 residues: Putative snRNP Sm-like protein (72 aa).

In terms of domain architecture, Sm spans 4-72; sequence RPLDILNDAL…RGDNVVYVSP (69 aa).

It belongs to the snRNP Sm proteins family.

The chain is Putative snRNP Sm-like protein from Methanococcoides burtonii (strain DSM 6242 / NBRC 107633 / OCM 468 / ACE-M).